The chain runs to 608 residues: Phosphogluconate dehydratase (608 aa).

[4Fe-4S] cluster contacts are provided by cysteine 154 and cysteine 221.

Belongs to the IlvD/Edd family. It depends on [4Fe-4S] cluster as a cofactor.

The catalysed reaction is 6-phospho-D-gluconate = 2-dehydro-3-deoxy-6-phospho-D-gluconate + H2O. It participates in carbohydrate metabolism; Entner-Doudoroff pathway. Its function is as follows. Catalyzes the dehydration of 6-phospho-D-gluconate to 2-dehydro-3-deoxy-6-phospho-D-gluconate. The protein is Phosphogluconate dehydratase of Helicobacter pylori (strain J99 / ATCC 700824) (Campylobacter pylori J99).